We begin with the raw amino-acid sequence, 295 residues long: Elongation factor Ts (295 aa).

Residues 79 to 82 (TDFV) are involved in Mg(2+) ion dislocation from EF-Tu.

The protein belongs to the EF-Ts family.

Its subcellular location is the cytoplasm. Its function is as follows. Associates with the EF-Tu.GDP complex and induces the exchange of GDP to GTP. It remains bound to the aminoacyl-tRNA.EF-Tu.GTP complex up to the GTP hydrolysis stage on the ribosome. This Bacillus anthracis (strain A0248) protein is Elongation factor Ts.